Reading from the N-terminus, the 213-residue chain is LexA repressor (213 aa).

Positions 31 to 51 (RAEISRELGFRSPNAAEEYLK) form a DNA-binding region, H-T-H motif. Residues Ser-129 and Lys-166 each act as for autocatalytic cleavage activity in the active site.

Belongs to the peptidase S24 family. In terms of assembly, homodimer.

The enzyme catalyses Hydrolysis of Ala-|-Gly bond in repressor LexA.. Its function is as follows. Represses a number of genes involved in the response to DNA damage (SOS response), including recA and lexA. In the presence of single-stranded DNA, RecA interacts with LexA causing an autocatalytic cleavage which disrupts the DNA-binding part of LexA, leading to derepression of the SOS regulon and eventually DNA repair. The polypeptide is LexA repressor (Mannheimia succiniciproducens (strain KCTC 0769BP / MBEL55E)).